We begin with the raw amino-acid sequence, 99 residues long: MAKKSLIEREKKRQRLVRKYRVMREYLKKKEKQVFSLEEKSKIKSKLQSLPRNSAPTRLHRRCVLTGRSRGIYRDFGLCRHIIREKAHACLLPGITKSS.

It belongs to the universal ribosomal protein uS14 family. In terms of assembly, part of the 30S ribosomal subunit.

The protein resides in the plastid. It localises to the chloroplast. In terms of biological role, binds 16S rRNA, required for the assembly of 30S particles. The chain is Small ribosomal subunit protein uS14c from Welwitschia mirabilis (Tree tumbo).